The primary structure comprises 93 residues: MTIIASISKIGNIKSSSSSSIGSGRNSAISFGSNKIACGECGGSSNPMGSLIGNVANTGAGKVSHIPVTVMVDASVAMNPSSMLPSGGSCGCN.

Belongs to the hssA/B family.

The chain is HssA/B-like protein 23 (hssl23) from Dictyostelium discoideum (Social amoeba).